Here is a 220-residue protein sequence, read N- to C-terminus: 7-cyano-7-deazaguanine synthase (220 aa).

10 to 20 (FSGGQDSTTCL) provides a ligand contact to ATP. Zn(2+) is bound by residues C186, C195, C198, and C201.

It belongs to the QueC family. Homodimer. Zn(2+) is required as a cofactor.

The catalysed reaction is 7-carboxy-7-deazaguanine + NH4(+) + ATP = 7-cyano-7-deazaguanine + ADP + phosphate + H2O + H(+). The protein operates within purine metabolism; 7-cyano-7-deazaguanine biosynthesis. Functionally, catalyzes the ATP-dependent conversion of 7-carboxy-7-deazaguanine (CDG) to 7-cyano-7-deazaguanine (preQ(0)). This Bacillus cereus (strain ATCC 14579 / DSM 31 / CCUG 7414 / JCM 2152 / NBRC 15305 / NCIMB 9373 / NCTC 2599 / NRRL B-3711) protein is 7-cyano-7-deazaguanine synthase.